Here is a 122-residue protein sequence, read N- to C-terminus: Large ribosomal subunit protein uL14 (122 aa).

This sequence belongs to the universal ribosomal protein uL14 family. As to quaternary structure, part of the 50S ribosomal subunit. Forms a cluster with proteins L3 and L19. In the 70S ribosome, L14 and L19 interact and together make contacts with the 16S rRNA in bridges B5 and B8.

Its function is as follows. Binds to 23S rRNA. Forms part of two intersubunit bridges in the 70S ribosome. The protein is Large ribosomal subunit protein uL14 of Shewanella sp. (strain ANA-3).